Reading from the N-terminus, the 373-residue chain is CCA-adding enzyme (373 aa).

ATP-binding residues include glycine 8 and arginine 11. Positions 8 and 11 each coordinate CTP. 2 residues coordinate Mg(2+): aspartate 21 and aspartate 23. Positions 91, 137, and 140 each coordinate ATP. Positions 91, 137, and 140 each coordinate CTP.

This sequence belongs to the tRNA nucleotidyltransferase/poly(A) polymerase family. Bacterial CCA-adding enzyme type 2 subfamily. Mg(2+) serves as cofactor.

The catalysed reaction is a tRNA precursor + 2 CTP + ATP = a tRNA with a 3' CCA end + 3 diphosphate. The enzyme catalyses a tRNA with a 3' CCA end + 2 CTP + ATP = a tRNA with a 3' CCACCA end + 3 diphosphate. Its function is as follows. Catalyzes the addition and repair of the essential 3'-terminal CCA sequence in tRNAs without using a nucleic acid template. Adds these three nucleotides in the order of C, C, and A to the tRNA nucleotide-73, using CTP and ATP as substrates and producing inorganic pyrophosphate. tRNA 3'-terminal CCA addition is required both for tRNA processing and repair. Also involved in tRNA surveillance by mediating tandem CCA addition to generate a CCACCA at the 3' terminus of unstable tRNAs. While stable tRNAs receive only 3'-terminal CCA, unstable tRNAs are marked with CCACCA and rapidly degraded. This chain is CCA-adding enzyme, found in Marinobacter nauticus (strain ATCC 700491 / DSM 11845 / VT8) (Marinobacter aquaeolei).